The following is a 428-amino-acid chain: Adenylosuccinate synthetase (428 aa).

GTP-binding positions include 12-18 (GDEGKGK) and 40-42 (GHT). Asp-13 (proton acceptor) is an active-site residue. Residues Asp-13 and Gly-40 each contribute to the Mg(2+) site. IMP-binding positions include 13 to 16 (DEGK), 38 to 41 (NAGH), Thr-128, Arg-142, Gln-223, Thr-238, and Arg-302. Catalysis depends on His-41, which acts as the Proton donor. 298–304 (VTTKRPR) contacts substrate. Residues Arg-304, 330 to 332 (KLD), and 412 to 414 (GVG) contribute to the GTP site.

Belongs to the adenylosuccinate synthetase family. As to quaternary structure, homodimer. It depends on Mg(2+) as a cofactor.

It localises to the cytoplasm. It carries out the reaction IMP + L-aspartate + GTP = N(6)-(1,2-dicarboxyethyl)-AMP + GDP + phosphate + 2 H(+). It functions in the pathway purine metabolism; AMP biosynthesis via de novo pathway; AMP from IMP: step 1/2. Functionally, plays an important role in the de novo pathway of purine nucleotide biosynthesis. Catalyzes the first committed step in the biosynthesis of AMP from IMP. The protein is Adenylosuccinate synthetase of Cutibacterium acnes (strain DSM 16379 / KPA171202) (Propionibacterium acnes).